The following is a 451-amino-acid chain: Probable beta-1,4-xylosyltransferase GT43E (451 aa).

Topologically, residues 1-88 (MVSSRRNTGG…SKSRGLSCKR (88 aa)) are cytoplasmic. Residues 89–109 (LAFHLFVCFMVGIFIGFMPFF) traverse the membrane as a helical; Signal-anchor for type II membrane protein segment. At 110 to 451 (SVDVSQKIVS…KNLDAVIPVT (342 aa)) the chain is on the lumenal side. 2 N-linked (GlcNAc...) asparagine glycosylation sites follow: N260 and N366.

Belongs to the glycosyltransferase 43 family.

Its subcellular location is the golgi apparatus membrane. Functionally, probable beta-1,4-xylosyltransferase involved in xylan biosynthesis in cell walls. The chain is Probable beta-1,4-xylosyltransferase GT43E from Oryza sativa subsp. japonica (Rice).